A 640-amino-acid chain; its full sequence is Calpain-5 (640 aa).

Positions 26 to 343 constitute a Calpain catalytic domain; sequence LFEDPHFPAS…FTDIIKCRLI (318 aa). Catalysis depends on residues C81, H252, and N284. The domain III stretch occupies residues 344–496; sequence NTSYLSIHKT…VFTDVPSNCR (153 aa). In terms of domain architecture, C2 spans 499 to 617; it reads RLDEPPRTCW…HSLHLQDRSG (119 aa).

Belongs to the peptidase C2 family.

Its function is as follows. Calcium-regulated non-lysosomal thiol-protease. The polypeptide is Calpain-5 (Capn5) (Rattus norvegicus (Rat)).